We begin with the raw amino-acid sequence, 122 residues long: uncharacterized protein (122 aa).

Positions 1 to 28 (MVPGPPESVVRFFLWFCFLLPPTRKASC) are cleaved as a signal peptide. Asn49 carries an N-linked (GlcNAc...) asparagine glycan.

Its subcellular location is the secreted. This is an uncharacterized protein from Homo sapiens (Human).